The chain runs to 225 residues: Thymidylate kinase (225 aa).

Position 15–22 (15–22 (GGEGSGKS)) interacts with ATP.

This sequence belongs to the thymidylate kinase family.

The catalysed reaction is dTMP + ATP = dTDP + ADP. In terms of biological role, phosphorylation of dTMP to form dTDP in both de novo and salvage pathways of dTTP synthesis. This chain is Thymidylate kinase, found in Protochlamydia amoebophila (strain UWE25).